Here is a 673-residue protein sequence, read N- to C-terminus: tRNA 5-methylaminomethyl-2-thiouridine biosynthesis bifunctional protein MnmC (673 aa).

A tRNA (mnm(5)s(2)U34)-methyltransferase region spans residues 1-245; sequence MSHAPIQTAA…KREMLIGELP (245 aa). Residues 272 to 673 form an FAD-dependent cmnm(5)s(2)U34 oxidoreductase region; it reads IGGGVASALT…VRKLLKGRAV (402 aa).

This sequence in the N-terminal section; belongs to the methyltransferase superfamily. tRNA (mnm(5)s(2)U34)-methyltransferase family. In the C-terminal section; belongs to the DAO family. Requires FAD as cofactor.

The protein resides in the cytoplasm. It catalyses the reaction 5-aminomethyl-2-thiouridine(34) in tRNA + S-adenosyl-L-methionine = 5-methylaminomethyl-2-thiouridine(34) in tRNA + S-adenosyl-L-homocysteine + H(+). Catalyzes the last two steps in the biosynthesis of 5-methylaminomethyl-2-thiouridine (mnm(5)s(2)U) at the wobble position (U34) in tRNA. Catalyzes the FAD-dependent demodification of cmnm(5)s(2)U34 to nm(5)s(2)U34, followed by the transfer of a methyl group from S-adenosyl-L-methionine to nm(5)s(2)U34, to form mnm(5)s(2)U34. This is tRNA 5-methylaminomethyl-2-thiouridine biosynthesis bifunctional protein MnmC from Serratia proteamaculans (strain 568).